The following is a 209-amino-acid chain: V-type ATP synthase subunit D (209 aa).

This sequence belongs to the V-ATPase D subunit family.

Its function is as follows. Produces ATP from ADP in the presence of a proton gradient across the membrane. The chain is V-type ATP synthase subunit D (atpD) from Chlamydia pneumoniae (Chlamydophila pneumoniae).